Reading from the N-terminus, the 215-residue chain is Probable transaldolase (215 aa).

Lys83 serves as the catalytic Schiff-base intermediate with substrate.

The protein belongs to the transaldolase family. Type 3B subfamily.

The protein resides in the cytoplasm. The enzyme catalyses D-sedoheptulose 7-phosphate + D-glyceraldehyde 3-phosphate = D-erythrose 4-phosphate + beta-D-fructose 6-phosphate. The protein operates within carbohydrate degradation; pentose phosphate pathway; D-glyceraldehyde 3-phosphate and beta-D-fructose 6-phosphate from D-ribose 5-phosphate and D-xylulose 5-phosphate (non-oxidative stage): step 2/3. Functionally, transaldolase is important for the balance of metabolites in the pentose-phosphate pathway. The chain is Probable transaldolase from Desulforudis audaxviator (strain MP104C).